We begin with the raw amino-acid sequence, 655 residues long: Fructose-1,6-bisphosphatase class 3 (655 aa).

This sequence belongs to the FBPase class 3 family. Mn(2+) is required as a cofactor.

The catalysed reaction is beta-D-fructose 1,6-bisphosphate + H2O = beta-D-fructose 6-phosphate + phosphate. Its pathway is carbohydrate biosynthesis; gluconeogenesis. The sequence is that of Fructose-1,6-bisphosphatase class 3 from Porphyromonas gingivalis (strain ATCC 33277 / DSM 20709 / CIP 103683 / JCM 12257 / NCTC 11834 / 2561).